Consider the following 67-residue polypeptide: Large ribosomal subunit protein bL35 (67 aa).

Residues 22-45 (GKIKRWKSGGAHYNTKKSSKRKRH) form a disordered region. Residues 35–45 (NTKKSSKRKRH) show a composition bias toward basic residues.

Belongs to the bacterial ribosomal protein bL35 family.

This is Large ribosomal subunit protein bL35 from Aquifex aeolicus (strain VF5).